The sequence spans 656 residues: Tetratricopeptide repeat protein 30 homolog (656 aa).

TPR repeat units follow at residues 9 to 42 (EGEFTSTIYTLIHEHKFNDAIRILQYQHERNPKN), 43 to 76 (LAALSLLAYCYYYTQDFMNAADCYSQLSYNFPQY), 141 to 174 (AAVIINTACIDYKEGNYEEALKKFNEATEFSGYQ), 176 to 208 (GLAYSIALCHYRRGDYDSALKLISEIINRGVKD), 238 to 271 (IEAFNLKFAIYYRTKDFKAAKESLTDMPPRNEHD), 378 to 412 (RKTAIEIQIKKEQKTTDSDDSLEMRNLIESYDDSL), 416 to 449 (LPVLMTYAKYYWDKRDYQAVEKLFRNSVDYCKEH), 451 to 484 (TWKLNVAHTIFMQEKKYKDAAAFYEPIVHKKYDD), and 537 to 570 (SIISLVIGSLYCSKGNFEFGISRVVKALEPPEKK).

Belongs to the TTC30/dfy-1/fleer family. In terms of assembly, component of the IFT complex B composed of at least che-2, che-13, dyf-1, dyf-3, dyf-6, dyf-11, dyf-13, ift-20, ift-74, ift-81, ifta-2, osm-1, osm-5 and osm-6. In terms of tissue distribution, expressed in most amphid, both phasmid and several labial-quadrant neurons.

It is found in the cell projection. It localises to the cilium. In terms of biological role, plays a role in anterograde intraflagellar transport (IFT), the process by which cilia precursors are transported from the base of the cilium to the site of their incorporation at the tip. Specifically required for the kinesin osm-3 to dock onto and move the IFT particles which contain these precursors. Component of the intraflagellar transport (IFT) complex B required for transport of proteins in the motile cilium. May be required for ciliary entrance and transport of specific ciliary cargo proteins such as che-3 which are related to motility. Required for polyglutamylation of axonemal tubulin in sensory cilia. The sequence is that of Tetratricopeptide repeat protein 30 homolog from Caenorhabditis elegans.